Here is a 690-residue protein sequence, read N- to C-terminus: UvrABC system protein C (690 aa).

A disordered region spans residues 1 to 60; the sequence is MTTDSSDPAKPAGPGQPPGSGADTRPGGLATGQDVDPATIETDEDDEARLPDVPDEPTDA. The span at 41 to 58 shows a compositional bias: acidic residues; sequence ETDEDDEARLPDVPDEPT. One can recognise a GIY-YIG domain in the interval 82–160; that stretch reads TSPGVYRMMN…IKQLRPRFNV (79 aa). Positions 270-305 constitute a UVR domain; sequence RAVKEELAREMEKASGDLAFERAALYRDRLAALSAI.

It belongs to the UvrC family. Interacts with UvrB in an incision complex.

The protein localises to the cytoplasm. The UvrABC repair system catalyzes the recognition and processing of DNA lesions. UvrC both incises the 5' and 3' sides of the lesion. The N-terminal half is responsible for the 3' incision and the C-terminal half is responsible for the 5' incision. This Nitrobacter hamburgensis (strain DSM 10229 / NCIMB 13809 / X14) protein is UvrABC system protein C.